Reading from the N-terminus, the 316-residue chain is Aspartate carbamoyltransferase catalytic subunit (316 aa).

Residues R58 and T59 each contribute to the carbamoyl phosphate site. L-aspartate is bound at residue K86. Carbamoyl phosphate contacts are provided by R108, H136, and Q139. Residues R169 and R223 each coordinate L-aspartate. Residues G264 and P265 each coordinate carbamoyl phosphate.

The protein belongs to the aspartate/ornithine carbamoyltransferase superfamily. ATCase family. As to quaternary structure, heterododecamer (2C3:3R2) of six catalytic PyrB chains organized as two trimers (C3), and six regulatory PyrI chains organized as three dimers (R2).

It carries out the reaction carbamoyl phosphate + L-aspartate = N-carbamoyl-L-aspartate + phosphate + H(+). The protein operates within pyrimidine metabolism; UMP biosynthesis via de novo pathway; (S)-dihydroorotate from bicarbonate: step 2/3. Catalyzes the condensation of carbamoyl phosphate and aspartate to form carbamoyl aspartate and inorganic phosphate, the committed step in the de novo pyrimidine nucleotide biosynthesis pathway. This Granulibacter bethesdensis (strain ATCC BAA-1260 / CGDNIH1) protein is Aspartate carbamoyltransferase catalytic subunit.